A 177-amino-acid chain; its full sequence is UPF0200 protein STK_09500 (177 aa).

11–18 (GMPGSGKG) serves as a coordination point for ATP.

The protein belongs to the UPF0200 family.

The polypeptide is UPF0200 protein STK_09500 (Sulfurisphaera tokodaii (strain DSM 16993 / JCM 10545 / NBRC 100140 / 7) (Sulfolobus tokodaii)).